Here is a 552-residue protein sequence, read N- to C-terminus: Chaperonin GroEL 3 (552 aa).

ATP-binding positions include 30–33, lysine 51, 87–91, glycine 415, and aspartate 495; these read TLGP and DGTTT.

The protein belongs to the chaperonin (HSP60) family. Forms a cylinder of 14 subunits composed of two heptameric rings stacked back-to-back. Interacts with the co-chaperonin GroES.

The protein resides in the cytoplasm. The catalysed reaction is ATP + H2O + a folded polypeptide = ADP + phosphate + an unfolded polypeptide.. Functionally, together with its co-chaperonin GroES, plays an essential role in assisting protein folding. The GroEL-GroES system forms a nano-cage that allows encapsulation of the non-native substrate proteins and provides a physical environment optimized to promote and accelerate protein folding. This is Chaperonin GroEL 3 from Mesorhizobium japonicum (strain LMG 29417 / CECT 9101 / MAFF 303099) (Mesorhizobium loti (strain MAFF 303099)).